The primary structure comprises 895 residues: MDLKKTLLMPKTSFAMQANLSTSEKNFHDFWKDKKVFQKLKKQNKGKQIKILHDGPPYANGSIHVGHALNKILKDFILRSWLYEGYDVVFIPGWDCHGLPIEHAVSKKNPSSYSNLSTVEKRKLCHQFALSQIAVQKEQFQRLGLLNDFQNCYYTIDESFQFKELELFLQAIKKGLIFQDLKPTYWSPISRTSLAEAEIEYKEVNSIALYLTFKVSKSDFLDENANLLVWTTTPWTLPTNQAIAIHPDFDYLLFEYNQQKFVILEKLFEVFTNKLNWTNAIKLKKFKGSNLKNSSYSHCFYNKVLPVLMGIHVVDNEGTGIVHSSPAFGIDDFYLCQKNKIKEVLISIDEKGVFNNLLNDKELENCFYLKANDLIINRLKQNNSFIFSEVISHREPHDWRSKTPVIYRASKQLFIKTKSIKKQLKKQINQVNFLNSKNQLRLKEMLLQRDEWCISRQRVWGLPIPIVYANNKPLLDFSTIQYTIKQLKKHGIDSWFEKDVTCFLKPDKTKKWVKYHKEIDTLDVWFDSGSSYNVLEINKYGSIADLYIEGSDQYRGWFNSSSNCGIIQNDLIPFKSLVSHGFTLDENGNKMSKSLGNIVDPLKICDQYGADILRLWVANTDWQIDNKIGVNILKQVAEQYRRIRNSLLRFILGNINGFNFTSMDDYKFSLEDKIVIHKTNSLVEQIEKFLEKYNFLGCLKVINKFVLWLSSWYFEIIKDTLYCDAKNNPNRLAKQAVLNYIFTQLISFLNIFIPHTAEDAWKNYSFNKKPISVNLFTKPTVFKVANSKNLENIYKTFTSIKNAAFKEIEKLRKEGLISKNNQIELTVGINKKIPKKLKDNLALWLNVNSVNLTNNENEIKVKKTKKTMCERCWNFQTIIKQKLDHNLCSRCFKVC.

Residues 57–67 (PYANGSIHVGH) carry the 'HIGH' region motif. Glu549 contacts L-isoleucyl-5'-AMP. The short motif at 590–594 (KMSKS) is the 'KMSKS' region element. Lys593 is an ATP binding site. Cys869, Cys872, Cys888, and Cys891 together coordinate Zn(2+).

The protein belongs to the class-I aminoacyl-tRNA synthetase family. IleS type 1 subfamily. As to quaternary structure, monomer. Zn(2+) is required as a cofactor.

The protein localises to the cytoplasm. The enzyme catalyses tRNA(Ile) + L-isoleucine + ATP = L-isoleucyl-tRNA(Ile) + AMP + diphosphate. Functionally, catalyzes the attachment of isoleucine to tRNA(Ile). As IleRS can inadvertently accommodate and process structurally similar amino acids such as valine, to avoid such errors it has two additional distinct tRNA(Ile)-dependent editing activities. One activity is designated as 'pretransfer' editing and involves the hydrolysis of activated Val-AMP. The other activity is designated 'posttransfer' editing and involves deacylation of mischarged Val-tRNA(Ile). This Mycoplasma genitalium (strain ATCC 33530 / DSM 19775 / NCTC 10195 / G37) (Mycoplasmoides genitalium) protein is Isoleucine--tRNA ligase.